Reading from the N-terminus, the 742-residue chain is 5-methyltetrahydropteroyltriglutamate--homocysteine methyltransferase (742 aa).

Residues 18 to 21 and Lys-112 each bind 5-methyltetrahydropteroyltri-L-glutamate; that span reads REWK. Residues 420 to 422 and Glu-473 contribute to the L-homocysteine site; that span reads IGS. L-methionine-binding positions include 420–422 and Glu-473; that span reads IGS. Trp-550 is a binding site for 5-methyltetrahydropteroyltri-L-glutamate. Position 588 (Asp-588) interacts with L-homocysteine. An L-methionine-binding site is contributed by Asp-588. Glu-594 lines the 5-methyltetrahydropteroyltri-L-glutamate pocket. Zn(2+) is bound by residues His-630, Cys-632, and Glu-654. His-683 acts as the Proton donor in catalysis. Cys-715 is a Zn(2+) binding site.

This sequence belongs to the vitamin-B12 independent methionine synthase family. The cofactor is Zn(2+).

The catalysed reaction is 5-methyltetrahydropteroyltri-L-glutamate + L-homocysteine = tetrahydropteroyltri-L-glutamate + L-methionine. It participates in amino-acid biosynthesis; L-methionine biosynthesis via de novo pathway; L-methionine from L-homocysteine (MetE route): step 1/1. Functionally, catalyzes the transfer of a methyl group from 5-methyltetrahydrofolate to homocysteine resulting in methionine formation. The polypeptide is 5-methyltetrahydropteroyltriglutamate--homocysteine methyltransferase (Staphylococcus aureus (strain bovine RF122 / ET3-1)).